A 164-amino-acid polypeptide reads, in one-letter code: LWamide neuropeptides (164 aa).

The propeptide occupies 1–6 (RSADAQ). A disordered region spans residues 1-92 (RSADAQQHGL…WGRSADAQQP (92 aa)). Tryptophan amide is present on residues Trp11 and Trp20. Positions 23–27 (SADAQ) are excised as a propeptide. Trp32 and Trp41 each carry tryptophan amide. Positions 44–49 (SAEPGQ) are excised as a propeptide. Residues Trp53 and Trp62 each carry the tryptophan amide modification. Positions 65–70 (SAEPLQ) are excised as a propeptide. Trp74 and Trp83 each carry tryptophan amide. A propeptide spanning residues 86–90 (SADAQ) is cleaved from the precursor. 3 positions are modified to tryptophan amide: Trp95, Trp106, and Trp115. The propeptide occupies 118 to 123 (SADPGQ). Tryptophan amide occurs at positions 127 and 137. Residues 140 to 164 (SYEPPQFEDLEDLKKKSAIPKPSEQ) constitute a propeptide that is removed on maturation.

Belongs to the LWamide neuropeptide family.

The protein resides in the secreted. Metamorphosin A may be part of an internal signaling system involved in control of metamorphosis. This Actinia equina (Beadlet anemone) protein is LWamide neuropeptides.